The chain runs to 968 residues: Chaperone protein ClpB3, chloroplastic (968 aa).

A chloroplast-targeting transit peptide spans 1-67 (MATATTTATA…RLDHRPFVVR (67 aa)). Positions 78–222 (TQQEFTEMAW…KSAIESIRGK (145 aa)) constitute a Clp R domain. Repeat regions lie at residues 82–147 (FTEM…IQRQ) and 159–222 (LGRD…IRGK). Residues 237–485 (LEKYGKDLTA…KLKMEITSKP (249 aa)) form an i region. Residue 282 to 289 (GEPGVGKT) participates in ATP binding. A coiled-coil region spans residues 488-606 (LDELDRSVIK…NEYLSSGKSM (119 aa)). Residues 611–802 (VLGSDIAEIV…VIIMTSNVGS (192 aa)) form an II region. Residue 685 to 692 (GPTGVGKT) participates in ATP binding.

It belongs to the ClpA/ClpB family.

The protein resides in the plastid. Its subcellular location is the chloroplast. Functionally, molecular chaperone essential for chloroplast development and seedling viability. Mediates internal thylakoid membrane formation and confers thermotolerance to chloroplasts during heat stress. The sequence is that of Chaperone protein ClpB3, chloroplastic (CLPB3) from Arabidopsis thaliana (Mouse-ear cress).